The sequence spans 439 residues: Nuclear distribution protein PAC1 (439 aa).

A coiled-coil region spans residues 55 to 90 (NSIVRLQSKIMELEKNCEELQKSIDEQQSSTNQISN). WD repeat units lie at residues 106 to 145 (TLDA…LPLQ), 149 to 193 (AHMD…TLSH), 199 to 240 (GHEH…CIKS), 243 to 282 (PHTQ…SMGI), 295 to 335 (IPDP…FIPH), 355 to 392 (DHNS…LSTT), and 402 to 438 (NKGF…TSFM).

This sequence belongs to the WD repeat LIS1/nudF family. In terms of assembly, self-associates. Interacts with NDL1 and dynein.

It is found in the cytoplasm. The protein resides in the cytoskeleton. The protein localises to the spindle pole. In terms of biological role, positively regulates the activity of the minus-end directed microtubule motor protein dynein. Plays a central role in positioning the mitotic spindle at the bud neck during cell division. Targets cytoplasmic dynein to microtubule plus ends, thereby promoting dynein-mediated microtubule sliding along the bud cortex and consequently the movement of the mitotic spindle to the bud neck. This chain is Nuclear distribution protein PAC1, found in Kluyveromyces lactis (strain ATCC 8585 / CBS 2359 / DSM 70799 / NBRC 1267 / NRRL Y-1140 / WM37) (Yeast).